The primary structure comprises 59 residues: Sec-independent protein translocase protein TatA (59 aa).

Residues 1 to 21 (MFSNIGFPGLILILVAVLILF) form a helical membrane-spanning segment.

Belongs to the TatA/E family. As to quaternary structure, forms a complex with TatC.

It localises to the cell membrane. Functionally, part of the twin-arginine translocation (Tat) system that transports large folded proteins containing a characteristic twin-arginine motif in their signal peptide across membranes. TatA could form the protein-conducting channel of the Tat system. In Bacillus mycoides (strain KBAB4) (Bacillus weihenstephanensis), this protein is Sec-independent protein translocase protein TatA.